The primary structure comprises 366 residues: Inactive PGL/p-HBAD biosynthesis glycosyltransferase Mb2982c (366 aa).

Disordered stretches follow at residues 1-23 (MEETSVAGDPGPDAGTSTAPNAA) and 295-366 (DGDR…HGGP). The segment covering 295–311 (DGDRGHRWPEPPEERAG) has biased composition (basic and acidic residues).

This sequence belongs to the UDP-glycosyltransferase family.

The protein is Inactive PGL/p-HBAD biosynthesis glycosyltransferase Mb2982c of Mycobacterium bovis (strain ATCC BAA-935 / AF2122/97).